Here is a 126-residue protein sequence, read N- to C-terminus: Ribosome-binding factor A (126 aa).

Belongs to the RbfA family. As to quaternary structure, monomer. Binds 30S ribosomal subunits, but not 50S ribosomal subunits or 70S ribosomes.

It localises to the cytoplasm. Functionally, one of several proteins that assist in the late maturation steps of the functional core of the 30S ribosomal subunit. Associates with free 30S ribosomal subunits (but not with 30S subunits that are part of 70S ribosomes or polysomes). Required for efficient processing of 16S rRNA. May interact with the 5'-terminal helix region of 16S rRNA. This chain is Ribosome-binding factor A, found in Thermosipho africanus (strain TCF52B).